The chain runs to 351 residues: Probable NADP-dependent isopropanol dehydrogenase (351 aa).

The Zn(2+) site is built by Cys-37, His-59, Glu-60, and Asp-150. Residues Ala-175 to Val-178, Asp-198 to Arg-200, Val-265 to Tyr-267, and Lys-340 contribute to the NADP(+) site.

The protein belongs to the zinc-containing alcohol dehydrogenase family. Requires Zn(2+) as cofactor.

The catalysed reaction is propan-2-ol + NADP(+) = acetone + NADPH + H(+). Its function is as follows. Alcohol dehydrogenase with a preference for medium chain secondary alcohols, such as 2-butanol and isopropanol. Has very low activity with primary alcohols, such as ethanol. Under physiological conditions, the enzyme reduces aldehydes and 2-ketones to produce secondary alcohols. Is also active with acetaldehyde and propionaldehyde. In Mycoplasma pneumoniae (strain ATCC 29342 / M129 / Subtype 1) (Mycoplasmoides pneumoniae), this protein is Probable NADP-dependent isopropanol dehydrogenase (adh).